Consider the following 334-residue polypeptide: Phosphate acyltransferase (334 aa).

The protein belongs to the PlsX family. In terms of assembly, homodimer. Probably interacts with PlsY.

It is found in the cytoplasm. It carries out the reaction a fatty acyl-[ACP] + phosphate = an acyl phosphate + holo-[ACP]. Its pathway is lipid metabolism; phospholipid metabolism. Its function is as follows. Catalyzes the reversible formation of acyl-phosphate (acyl-PO(4)) from acyl-[acyl-carrier-protein] (acyl-ACP). This enzyme utilizes acyl-ACP as fatty acyl donor, but not acyl-CoA. In Mycoplasma capricolum subsp. capricolum (strain California kid / ATCC 27343 / NCTC 10154), this protein is Phosphate acyltransferase.